Here is a 271-residue protein sequence, read N- to C-terminus: Tropinone reductase homolog At2g29360 (271 aa).

Residue 22–46 (LVTGGSKGIGEAVVEELATLGARIH) participates in NADP(+) binding. Ser155 contributes to the substrate binding site. Catalysis depends on Tyr168, which acts as the Proton acceptor.

This sequence belongs to the short-chain dehydrogenases/reductases (SDR) family. SDR65C subfamily.

Its function is as follows. Oxidoreductase active on cyclic ketones, but not on tropinone or nortropinone. The protein is Tropinone reductase homolog At2g29360 of Arabidopsis thaliana (Mouse-ear cress).